The chain runs to 307 residues: Nicotinamide/nicotinic acid mononucleotide adenylyltransferase 2 (307 aa).

NAD(+) is bound by residues S16 and F17. H24 lines the ATP pocket. NAD(+) is bound by residues W92, T95, G200, D202, L212, W213, and R232. An ATP-binding site is contributed by 271–274 (TKSR).

It belongs to the eukaryotic NMN adenylyltransferase family. In terms of assembly, monomer. It depends on Mg(2+) as a cofactor.

It is found in the golgi apparatus membrane. Its subcellular location is the cytoplasmic vesicle membrane. It localises to the cytoplasm. The protein resides in the cell projection. The protein localises to the axon. The enzyme catalyses beta-nicotinamide D-ribonucleotide + ATP + H(+) = diphosphate + NAD(+). It catalyses the reaction nicotinate beta-D-ribonucleotide + ATP + H(+) = deamido-NAD(+) + diphosphate. The protein operates within cofactor biosynthesis; NAD(+) biosynthesis; NAD(+) from nicotinamide D-ribonucleotide: step 1/1. Its pathway is cofactor biosynthesis; NAD(+) biosynthesis; deamido-NAD(+) from nicotinate D-ribonucleotide: step 1/1. Functionally, nicotinamide/nicotinate-nucleotide adenylyltransferase that acts as an axon maintenance factor. Axon survival factor required for the maintenance of healthy axons: acts by delaying Wallerian axon degeneration, an evolutionarily conserved process that drives the loss of damaged axons. Catalyzes the formation of NAD(+) from nicotinamide mononucleotide (NMN) and ATP. Can also use the deamidated form; nicotinic acid mononucleotide (NaMN) as substrate but with a lower efficiency. Also catalyzes the reverse reaction, i.e. the pyrophosphorolytic cleavage of NAD(+). For the pyrophosphorolytic activity prefers NAD(+), NADH and NaAD as substrates and degrades nicotinic acid adenine dinucleotide phosphate (NHD) less effectively. Also acts as an activator of ADP-ribosylation by supporting the catalytic activity of PARP16 and promoting mono-ADP-ribosylation of ribosomes by PARP16. May be involved in the maintenance of axonal integrity. The polypeptide is Nicotinamide/nicotinic acid mononucleotide adenylyltransferase 2 (nmnat2) (Xenopus tropicalis (Western clawed frog)).